Reading from the N-terminus, the 94-residue chain is Small ribosomal subunit protein uS19 (94 aa).

Belongs to the universal ribosomal protein uS19 family.

Its function is as follows. Protein S19 forms a complex with S13 that binds strongly to the 16S ribosomal RNA. This chain is Small ribosomal subunit protein uS19, found in Wolbachia sp. subsp. Brugia malayi (strain TRS).